We begin with the raw amino-acid sequence, 92 residues long: MAFIKRSDKKKKPFKKESSLFKRKRYCRFTVAGVEQIDYKDLDTLKDFIGDNGKITPARLTGTKAHYQRQLNTAIKRARFLALLPYTDLHKH.

It belongs to the bacterial ribosomal protein bS18 family. In terms of assembly, part of the 30S ribosomal subunit. Forms a tight heterodimer with protein bS6.

Its function is as follows. Binds as a heterodimer with protein bS6 to the central domain of the 16S rRNA, where it helps stabilize the platform of the 30S subunit. The protein is Small ribosomal subunit protein bS18B of Cupriavidus pinatubonensis (strain JMP 134 / LMG 1197) (Cupriavidus necator (strain JMP 134)).